The following is a 435-amino-acid chain: Nuclear receptor subfamily 6 group A member 1 (435 aa).

Residues 11 to 86 (QRACLICGDR…MGMNRKAIRE (76 aa)) constitute a DNA-binding region (nuclear receptor). 2 NR C4-type zinc fingers span residues 14–34 (CLICGDRATGLHYGIISCEGC) and 50–69 (CSRDKNCVMSRKQRNRCQYC). Residues 84–158 (IREDGMPGGR…STPSSSRSME (75 aa)) form a disordered region. The span at 121–141 (NTSWSNNGDSDHSSPGNAVSE) shows a compositional bias: polar residues. The span at 142–156 (SNQPSPVSTPSSSRS) shows a compositional bias: low complexity. The NR LBD domain occupies 204-435 (QSHTLINQLL…HSCKTIVTKE (232 aa)).

Belongs to the nuclear hormone receptor family. NR6 subfamily. As to quaternary structure, homodimer. As to expression, transiently expressed in differentiating cells of all embryonic germ layers. Expressed in an anterior to posterior concentration gradient from late gastrula to midneurula stages. Shows a complicated spatio-temporal pattern of expression during neurulation, being predominant in the neural plate and neural crest in midneurula embryos. At late tailbud (stage 30), mainly expressed in the head mesenchyme, gill arches and tail tip. Expression persists in the epidermis, somites and endoderm, and in the central nervous system, expression is restricted to the midbrain, hindbrain and part of the spinal cord. Isoforms Oo and Em are both expressed in the brain and isoform Oo is expressed in the germ cells of both the adult testis and ovary.

Its subcellular location is the cytoplasm. It is found in the nucleus. Probable orphan nuclear receptor. Binds to a response element containing repeats of the motif 5'-AGGTCA-3'. Required for anterior-posterior patterning during organogenesis. Acts with chordin to play a role in patterning the midbrain-hindbrain. Isoform Em is required for integrin-mediated cell matrix interaction during neurulation and for the morphogenetic movements leading to formation of the neural tube. Also mediates the effect of retinoic acid on primary neurogenesis. This Xenopus laevis (African clawed frog) protein is Nuclear receptor subfamily 6 group A member 1.